Here is a 141-residue protein sequence, read N- to C-terminus: Large ribosomal subunit protein uL11 (141 aa).

It belongs to the universal ribosomal protein uL11 family. In terms of assembly, part of the ribosomal stalk of the 50S ribosomal subunit. Interacts with L10 and the large rRNA to form the base of the stalk. L10 forms an elongated spine to which L12 dimers bind in a sequential fashion forming a multimeric L10(L12)X complex. One or more lysine residues are methylated.

Functionally, forms part of the ribosomal stalk which helps the ribosome interact with GTP-bound translation factors. The chain is Large ribosomal subunit protein uL11 from Synechococcus sp. (strain JA-3-3Ab) (Cyanobacteria bacterium Yellowstone A-Prime).